Reading from the N-terminus, the 84-residue chain is uncharacterized protein (84 aa).

The tract at residues 62 to 84 (GYATKKDTMRMSAQKRTTKRLKP) is disordered.

This is an uncharacterized protein from Soybean chlorotic mottle virus.